A 243-amino-acid polypeptide reads, in one-letter code: Small ribosomal subunit protein uS3 (243 aa).

One can recognise a KH type-2 domain in the interval 38–106 (IRKYLNARLA…DIQINIFEVK (69 aa)). Positions 214-243 (PNFTQSKESGRGNNGGNNGGKNFKRKKNNR) are disordered.

The protein belongs to the universal ribosomal protein uS3 family. As to quaternary structure, part of the 30S ribosomal subunit. Forms a tight complex with proteins S10 and S14.

Functionally, binds the lower part of the 30S subunit head. Binds mRNA in the 70S ribosome, positioning it for translation. The polypeptide is Small ribosomal subunit protein uS3 (Bacteroides thetaiotaomicron (strain ATCC 29148 / DSM 2079 / JCM 5827 / CCUG 10774 / NCTC 10582 / VPI-5482 / E50)).